The following is a 56-amino-acid chain: Large ribosomal subunit protein bL32 (56 aa).

Positions 1-20 (MAVPKKKKSKSKRNHRHAVW) are enriched in basic residues. The segment at 1–21 (MAVPKKKKSKSKRNHRHAVWK) is disordered.

This sequence belongs to the bacterial ribosomal protein bL32 family.

This chain is Large ribosomal subunit protein bL32, found in Prochlorococcus marinus (strain MIT 9312).